The sequence spans 187 residues: Small ribosomal subunit protein uS10m (187 aa).

This sequence belongs to the universal ribosomal protein uS10 family. As to quaternary structure, component of the mitochondrial ribosome small subunit (28S) which comprises a 12S rRNA and about 30 distinct proteins.

The protein localises to the mitochondrion. The sequence is that of Small ribosomal subunit protein uS10m (mrps10) from Danio rerio (Zebrafish).